Consider the following 596-residue polypeptide: uncharacterized protein (596 aa).

The first 20 residues, 1 to 20 (MRYKPLLLALMLVFSTPAVA), serve as a signal peptide directing secretion. Basic and acidic residues-rich tracts occupy residues 25 to 90 (AHNR…KEAT) and 161 to 184 (VRSD…NAKT). Residues 25-184 (AHNRSAEVKK…KYREEKNAKT (160 aa)) are disordered. Coiled-coil stretches lie at residues 177–281 (REEK…RFVS) and 318–454 (NREV…TAED).

It belongs to the peptidase M23B family.

This is an uncharacterized protein from Neisseria meningitidis serogroup B (strain ATCC BAA-335 / MC58).